The sequence spans 389 residues: Chalcone synthase 4 (389 aa).

Residue Cys-164 is part of the active site.

It belongs to the thiolase-like superfamily. Chalcone/stilbene synthases family.

The catalysed reaction is (E)-4-coumaroyl-CoA + 3 malonyl-CoA + 3 H(+) = 2',4,4',6'-tetrahydroxychalcone + 3 CO2 + 4 CoA. Its pathway is secondary metabolite biosynthesis; flavonoid biosynthesis. Functionally, the primary product of this enzyme is 4,2',4',6'-tetrahydroxychalcone (also termed naringenin-chalcone or chalcone) which can under specific conditions spontaneously isomerize into naringenin. The sequence is that of Chalcone synthase 4 (CHS4) from Pisum sativum (Garden pea).